The primary structure comprises 166 residues: Endoribonuclease YbeY (166 aa).

Zn(2+) contacts are provided by H136, H140, and H146.

This sequence belongs to the endoribonuclease YbeY family. The cofactor is Zn(2+).

The protein localises to the cytoplasm. Its function is as follows. Single strand-specific metallo-endoribonuclease involved in late-stage 70S ribosome quality control and in maturation of the 3' terminus of the 16S rRNA. This is Endoribonuclease YbeY from Synechococcus sp. (strain CC9605).